A 378-amino-acid polypeptide reads, in one-letter code: MTIGNFRPATVLIDETAILHNIQHEVARLKKQTQLFAVVKADAYGHGMLRVARVAKAAGATGFCVAILDEALGLRKADYSEPVLVLGIVPSQYAAIAAAQTISLPVSSTEWLEQALPVLEAQPELPPLRIHLALDTGMGRIGFTEDQALKTAVAFVEAHPKQFVIEGVFTHFATADAPDDTYFKQQVDKFNHLVNLLPSRPRYVHVSNSATSLWHAACNGNMIRYGVAIYGLNPSGDAIPTTPFPLEPALSLKSELTYCKQVHAGDGISYGVTYRAKGDEFIGTVPIGYADGWLRRLQGFHVLVDGQYCEIVGRICMDQFMIRLPKAYPAGTKVVLVGQSGDQEITLLDVAKYSKTIHYEIACNLTPRLKRQSVNPVD.

The active-site Proton acceptor; specific for D-alanine is the Lys-40. N6-(pyridoxal phosphate)lysine is present on Lys-40. Position 140 (Arg-140) interacts with substrate. Tyr-270 acts as the Proton acceptor; specific for L-alanine in catalysis. Met-317 is a substrate binding site.

This sequence belongs to the alanine racemase family. Pyridoxal 5'-phosphate serves as cofactor.

It catalyses the reaction L-alanine = D-alanine. Its pathway is amino-acid biosynthesis; D-alanine biosynthesis; D-alanine from L-alanine: step 1/1. Functionally, catalyzes the interconversion of L-alanine and D-alanine. May also act on other amino acids. The sequence is that of Alanine racemase (alr) from Lacticaseibacillus paracasei (strain ATCC 334 / BCRC 17002 / CCUG 31169 / CIP 107868 / KCTC 3260 / NRRL B-441) (Lactobacillus paracasei).